A 57-amino-acid chain; its full sequence is Defensin-like protein 302 (57 aa).

Disulfide bonds link Cys19–Cys39, Cys26–Cys44, and Cys32–Cys46.

It belongs to the DEFL family.

This Arabidopsis thaliana (Mouse-ear cress) protein is Defensin-like protein 302.